Here is a 64-residue protein sequence, read N- to C-terminus: Large ribosomal subunit protein bL28 (64 aa).

Positions 1 to 23 (MARKDQISHRGPLSGNNRSHALN) are disordered.

Belongs to the bacterial ribosomal protein bL28 family.

This is Large ribosomal subunit protein bL28 from Mesomycoplasma hyopneumoniae (strain J / ATCC 25934 / NCTC 10110) (Mycoplasma hyopneumoniae).